A 103-amino-acid polypeptide reads, in one-letter code: Ghrelin (103 aa).

The first 26 residues, 1–26 (MPLRRRASHMFVLLCALSLCVESVKG), serve as a signal peptide directing secretion. Residues 27–51 (GTSFLSPAQKPQGRRPPRMGRRDVA) are disordered. Serine 29 is lipidated: O-decanoyl serine; alternate. Serine 29 carries O-hexanoyl serine; alternate lipidation. Serine 29 carries the O-octanoyl serine; alternate lipid modification. Glutamine 38 bears the Glutamine amide mark. The residue at position 45 (methionine 45) is a Methionine amide. Residues 49–103 (DVAEPEIPVIKEDDQFMMSAPFELSVSLSEAEYEKYGPVLQKVLVNLLGDSPLEF) constitute a propeptide, removed in mature form.

It belongs to the motilin family. Post-translationally, O-octanoylated by GOAT/MBOAT4. O-octanoylation or O-decanoylation is essential for activity. The O-decanoylated form differs in the length of the carbon backbone of the carboxylic acid forming an ester bond with Ser-29. As to expression, expressed in the telencephalon, hypothalamus, pituitary, intestine, liver, spleen and gill, with expression strongest in the intestine.

The protein localises to the secreted. Its function is as follows. Ligand for growth hormone secretagogue receptor type 1 (GHSR). Induces the release of growth hormone from the pituitary. Induces adiposity and stimulates gastric acid secretion. Involved in growth regulation. Has an appetite-stimulating effect. The protein is Ghrelin (ghrl) of Carassius auratus (Goldfish).